The primary structure comprises 259 residues: MKLNERSVAHYALSDSPADHMGFLRTWGGPGTPPTPSGTGRRCWFVLKGNLLFSFESREGRAPLSLVVLEGCTVELAEAPVPEEFAFAICFDAPGVRPHLLAAEGPAAQEAWVKVLSRASFGYMRLVVRELESQLQDARQSLALQRRSSWKSVASRCKPQAPNHRAAGLENGHCLSKDSSPVGLVEEAGSRSAGWGLAEWELQGPASLLLGKGQSPVSPETSCFSTLHDWYGQEIVELRQCWQKRAQGSHSKCEEQDRP.

Residues 17-121 form the PH domain; sequence PADHMGFLRT…WVKVLSRASF (105 aa). Residues 124–149 are a coiled coil; that stretch reads MRLVVRELESQLQDARQSLALQRRSS. The F&amp;H signature appears at 223–235; that stretch reads CFSTLHDWYGQEI.

It belongs to the sesquipedalian family. In terms of assembly, forms homodimers and heterodimers with PHETA1. Interacts with OCRL and INPP5B.

The protein resides in the early endosome. The protein localises to the recycling endosome. It localises to the golgi apparatus. It is found in the trans-Golgi network. Its subcellular location is the cytoplasmic vesicle. The protein resides in the clathrin-coated vesicle. In terms of biological role, plays a role in endocytic trafficking. Required for receptor recycling from endosomes, both to the trans-Golgi network and the plasma membrane. In Homo sapiens (Human), this protein is Sesquipedalian-2.